Reading from the N-terminus, the 341-residue chain is Glycerol-3-phosphate dehydrogenase [NAD(P)+] (341 aa).

NADPH is bound by residues Ser15, Trp16, Arg36, and Lys110. The sn-glycerol 3-phosphate site is built by Lys110, Gly139, and Ser141. Ala143 contacts NADPH. 5 residues coordinate sn-glycerol 3-phosphate: Lys194, Asp247, Ser257, Arg258, and Asn259. The active-site Proton acceptor is Lys194. Residue Arg258 coordinates NADPH. Residues Val282 and Glu284 each coordinate NADPH.

It belongs to the NAD-dependent glycerol-3-phosphate dehydrogenase family.

Its subcellular location is the cytoplasm. The catalysed reaction is sn-glycerol 3-phosphate + NAD(+) = dihydroxyacetone phosphate + NADH + H(+). The enzyme catalyses sn-glycerol 3-phosphate + NADP(+) = dihydroxyacetone phosphate + NADPH + H(+). The protein operates within membrane lipid metabolism; glycerophospholipid metabolism. Catalyzes the reduction of the glycolytic intermediate dihydroxyacetone phosphate (DHAP) to sn-glycerol 3-phosphate (G3P), the key precursor for phospholipid synthesis. In Xanthomonas euvesicatoria pv. vesicatoria (strain 85-10) (Xanthomonas campestris pv. vesicatoria), this protein is Glycerol-3-phosphate dehydrogenase [NAD(P)+].